Reading from the N-terminus, the 122-residue chain is Small ribosomal subunit protein uS13 (122 aa).

The disordered stretch occupies residues 95-122; the sequence is GLPVRGQRTHTNARTRKGPAKPIAGKKK.

It belongs to the universal ribosomal protein uS13 family. In terms of assembly, part of the 30S ribosomal subunit. Forms a loose heterodimer with protein S19. Forms two bridges to the 50S subunit in the 70S ribosome.

Functionally, located at the top of the head of the 30S subunit, it contacts several helices of the 16S rRNA. In the 70S ribosome it contacts the 23S rRNA (bridge B1a) and protein L5 of the 50S subunit (bridge B1b), connecting the 2 subunits; these bridges are implicated in subunit movement. Contacts the tRNAs in the A and P-sites. The chain is Small ribosomal subunit protein uS13 from Xanthobacter autotrophicus (strain ATCC BAA-1158 / Py2).